Here is a 494-residue protein sequence, read N- to C-terminus: UPF0371 protein Sez_1293 (494 aa).

It belongs to the UPF0371 family.

This is UPF0371 protein Sez_1293 from Streptococcus equi subsp. zooepidemicus (strain MGCS10565).